Reading from the N-terminus, the 75-residue chain is Sperm-specific protein PL-I (75 aa).

The 73-residue stretch at 2 to 74 (GSSGMMSMVA…GSAGWVLVPK (73 aa)) folds into the H15 domain.

It belongs to the histone H1/H5 family. As to expression, sperm.

The protein resides in the nucleus. It localises to the chromosome. Its function is as follows. Linker histones are implicated in chromatin remodeling and/or transcriptional regulation during spermiogenesis, the process of spermatid maturation into spermatozoa. In Spisula solidissima (Atlantic surf-clam), this protein is Sperm-specific protein PL-I.